Reading from the N-terminus, the 208-residue chain is MNYPNGKPYRKNSAIDGGKKTAAFSNIEYGGRGMSLEKDIEHSNTFYLKSDIAVIHKKPTPVQIVNVNYPKRSKAVINEAYFRTPSTTDYNGVYQGYYIDFEAKETKNKTSFPLNNIHDHQVEHMKNAYQQKGIVFLMIRFKTLDEVYLLPYSKFEVFWKRYKDNIKKSITVDEIRKNGYHIPYQYQPRLDYLKAVDKLILDESEDRV.

Mg(2+) contacts are provided by Thr-87, Asp-89, Glu-102, and Gln-121.

The protein belongs to the RecU family. Requires Mg(2+) as cofactor.

It is found in the cytoplasm. It carries out the reaction Endonucleolytic cleavage at a junction such as a reciprocal single-stranded crossover between two homologous DNA duplexes (Holliday junction).. Endonuclease that resolves Holliday junction intermediates in genetic recombination. Cleaves mobile four-strand junctions by introducing symmetrical nicks in paired strands. Promotes annealing of linear ssDNA with homologous dsDNA. Required for DNA repair, homologous recombination and chromosome segregation. The chain is Holliday junction resolvase RecU from Staphylococcus aureus (strain Mu3 / ATCC 700698).